The primary structure comprises 134 residues: DNA-binding protein StpA (134 aa).

Residues 73-94 (EELLGNSSAAAPRAGKKRQPRP) are disordered. A DNA-binding region spans residues 112-117 (QGRTPK).

The protein belongs to the histone-like protein H-NS family. In terms of assembly, forms homodimers, can interact with H-NS. May interact with Hha and/or Cnu.

Its subcellular location is the cytoplasm. The protein resides in the nucleoid. In terms of biological role, a DNA-binding protein that acts in a fashion similar to H-NS, repressing gene transcription. A subset of H-NS/StpA-regulated genes require auxillary proteins for repression; these auxillary proteins (Hha and other similar proteins) may also modulate oligomerization of the H-NS/StpA complex. The protein is DNA-binding protein StpA (stpA) of Escherichia coli O157:H7.